The sequence spans 508 residues: Maturase K (508 aa).

It belongs to the intron maturase 2 family. MatK subfamily.

The protein localises to the plastid. The protein resides in the chloroplast. Functionally, usually encoded in the trnK tRNA gene intron. Probably assists in splicing its own and other chloroplast group II introns. This chain is Maturase K, found in Amburana cearensis (Cerejeira).